A 313-amino-acid polypeptide reads, in one-letter code: Lactamase-like protein ptaB (313 aa).

Zn(2+) is bound by residues H104, H106, D108, and H109. D108 serves as the catalytic Proton donor/acceptor.

This sequence belongs to the metallo-beta-lactamase superfamily. Zn(2+) serves as cofactor.

The catalysed reaction is atrochrysone carboxyl-[ACP] + H2O = atrochrysone carboxylate + holo-[ACP] + H(+). It participates in secondary metabolite biosynthesis. In terms of biological role, lactamase-like protein; part of the gene cluster that mediates the biosynthesis of pestheic acid, a diphenyl ether which is a biosynthetic precursor of the unique chloropupukeananes. The biosynthesis initiates from condensation of acetate and malonate units catalyzed by the non-reducing PKS ptaA. As the ptaA protein is TE/CLC domain-deficient, hydrolysis and Claisen cyclization of the polyketide could be catalyzed by ptaB containing a beta-lactamase domain. The ptaB protein might hydrolyze the thioester bond between the ACP of ptaA and the intermediate to release atrochrysone carboxylic acid, which is spontaneously dehydrated to form endocrocin anthrone. Endocrocin anthrone is then converted to endocrocin, catalyzed by the anthrone oxygenase ptaC. Spontaneous decarboxylation of endocrocin occurs to generate emodin. An O-methyltransferase (ptaH or ptaI) could methylate emodin to form physcion. PtaJ could then catalyze the oxidative cleavage of physcion, and rotation of the intermediate could then afford desmethylisosulochrin. PtaF, a putative NADH-dependent oxidoreductase, might also participate in the oxidative cleavage step. Desmethylisosulochrin is then transformed by another O-methyltransferase (ptaH or ptaI) to form isosulochrin. Chlorination of isosulochrin by ptaM in the cyclohexadienone B ring then produces chloroisosulochrin. PtaE is responsible for the oxidative coupling reactions of both benzophenones isosulochrin and chloroisosulochrin to RES-1214-1 and pestheic acid respectively, regardless of chlorination. This Pestalotiopsis fici (strain W106-1 / CGMCC3.15140) protein is Lactamase-like protein ptaB.